Consider the following 1251-residue polypeptide: MLEKFHKNKKDSYLNKEEGSLTSDGSDSPKEILETSERIVKKALQLTEETDENVHPEKMQLQKSNGVAFSLSRDSLETNDSFVASGPNQSNTGLGLDTLEEQEEKEIFFAKLEQEASSPIDYSRLNKELNLSDSIVLAPFVRNESEKEVESTAEEKCESYSEDFEEDTDANPAFKTEESQEPNSGMLAKVVLLDSQDSTTEFQKAAETSGVALSEHDLPQEVGGTEMNEAGTLCGQTTSDTEALHHAYHHHIDQSLGDTDEQKIHSSSMAISQCLVQVTSQNHNLYSKNTSTTESDLPTVEEFMRPIKGDCYNARGFDLEPESPVKVIGSTVNEHVNHLPYKEHKNESVWETNLLEKFNREDSIFLQTAANEDSFLRMPGKEIQTSEVQPDVLSKEIIQDCLLSQGSKTKQVLQSCCLKNEKSESTTTKQMLYKNIRSTTPLHKKKSSYGPHGVVRSSGYGKSTSYSKQSIPATERKIPKETLKKSIMKCRSPADKARSKEALFTTRTIRSAANQQASKEDISRAMPDQSVVQNLGHQVVDSFRQHHSDLPVSPVKSCERELRLLRRAQVAEEDLSRARDVIQQLTSTVSEKEKEMETKIVELKTRYEKELSQLGQENYVLQSKLRSVEELSKEKRWIHQTGTVSVPEEKLAQIQKEMEDQEVIIQGYQQENERLYKQMKDLQIQNKKNEEQMYKENQCLMSELIALREKVERINIQSQIVRESEPARNQSFTELISELRAARKEETKLREEIRRLKQDKQALELDLGQAKKERDLAKVQITSTSSEKSYEFKIMEETYKQEILHLKRRLHWYAENQDLLDKDAARLKEAREEIEKLKQEVKKLRAEAGDHQCVQQKKRLRDRAADAKRIQDLERQIKEMEGILKRRYPNSLPALIYAAAAAEKTNDLSAKTNTTDFLERRIKKLETELEGKDDEAKTSLRAMEQQFQKIKMQYEQRLAELEQLLAYKWKSESPKLNGDKANCIELELQLQNLKKTHQITVENLQTEIENLKSQNSQLKLRSKKDNKDLQLADWQMKQGNTKEKLLKLNQELITKNREIQDLTKTVEKLQKERMAMLSDNNLRNKTDNKENRQESLKNNTVATEKRNSCNSEPLIGIFNNDKIYQPHNFSDSNVLEVLQENARLKEEVEKLSLEMNQQRVKSQATLAYSENNIRRIQEDTAEYVAALKASHQREVEKILSQYTKDDSASKVAELNGRISTQEILIKHLQEQISEHQRHQEALLVSQMREEF.

Composition is skewed to basic and acidic residues over residues 1-19 and 144-159; these read MLEK…KEEG and ESEK…KCES. 3 disordered regions span residues 1-33, 144-183, and 442-473; these read MLEK…KEIL, ESEK…QEPN, and LHKK…SIPA. Acidic residues predominate over residues 160–169; it reads YSEDFEEDTD. Residues 457-470 show a composition bias toward low complexity; that stretch reads SSGYGKSTSYSKQS. 3 coiled-coil regions span residues 559–782, 813–1165, and 1210–1242; these read EREL…VQIT, YAEN…SQAT, and KVAE…QEAL. Residues 1078–1100 are disordered; it reads SDNNLRNKTDNKENRQESLKNNT. Residues 1082-1095 show a composition bias toward basic and acidic residues; the sequence is LRNKTDNKENRQES.

It belongs to the CEP162 family. As to expression, expressed in retina and brain (at protein level).

Its subcellular location is the cytoplasm. The protein localises to the cytoskeleton. It localises to the microtubule organizing center. It is found in the centrosome. The protein resides in the centriole. Its subcellular location is the nucleus. Functionally, required to promote assembly of the transition zone in primary cilia. Acts by specifically recognizing and binding the axonemal microtubule. Plays a role in cell proliferation and differentiation in the neuroretina. Has an ATPase activity in vitro. This chain is Centrosomal protein of 162 kDa (CEP162), found in Coturnix coturnix (Common quail).